The sequence spans 510 residues: Beta-glucosidase 40 (510 aa).

The first 29 residues, 1 to 29 (MAHRRLIMTMTKMMMMVTMMMMMDKTCIC), serve as a signal peptide directing secretion. A beta-D-glucoside contacts are provided by residues Q51, H152, and 197–198 (NE). E198 (proton donor) is an active-site residue. The cysteines at positions 217 and 225 are disulfide-linked. N229 and N278 each carry an N-linked (GlcNAc...) asparagine glycan. Residue Y341 coordinates a beta-D-glucoside. N349 is a glycosylation site (N-linked (GlcNAc...) asparagine). Residues E414, W464, 471–472 (EW), and F480 each bind a beta-D-glucoside. The Nucleophile role is filled by E414. The N-linked (GlcNAc...) asparagine glycan is linked to N507.

This sequence belongs to the glycosyl hydrolase 1 family.

The catalysed reaction is Hydrolysis of terminal, non-reducing beta-D-glucosyl residues with release of beta-D-glucose.. The protein is Beta-glucosidase 40 of Arabidopsis thaliana (Mouse-ear cress).